A 338-amino-acid chain; its full sequence is S-adenosylmethionine:tRNA ribosyltransferase-isomerase (338 aa).

This sequence belongs to the QueA family. As to quaternary structure, monomer.

The protein resides in the cytoplasm. The catalysed reaction is 7-aminomethyl-7-carbaguanosine(34) in tRNA + S-adenosyl-L-methionine = epoxyqueuosine(34) in tRNA + adenine + L-methionine + 2 H(+). The protein operates within tRNA modification; tRNA-queuosine biosynthesis. Functionally, transfers and isomerizes the ribose moiety from AdoMet to the 7-aminomethyl group of 7-deazaguanine (preQ1-tRNA) to give epoxyqueuosine (oQ-tRNA). The protein is S-adenosylmethionine:tRNA ribosyltransferase-isomerase of Carboxydothermus hydrogenoformans (strain ATCC BAA-161 / DSM 6008 / Z-2901).